We begin with the raw amino-acid sequence, 318 residues long: Probable aminopeptidase YbaC (318 aa).

The Nucleophile role is filled by S115. D266 is an active-site residue. H296 functions as the Proton donor in the catalytic mechanism.

It belongs to the peptidase S33 family.

Its function is as follows. Probable aminopeptidase. The polypeptide is Probable aminopeptidase YbaC (ybaC) (Bacillus subtilis (strain 168)).